The primary structure comprises 201 residues: Probable nicotinate-nucleotide adenylyltransferase (201 aa).

The protein belongs to the NadD family.

The catalysed reaction is nicotinate beta-D-ribonucleotide + ATP + H(+) = deamido-NAD(+) + diphosphate. The protein operates within cofactor biosynthesis; NAD(+) biosynthesis; deamido-NAD(+) from nicotinate D-ribonucleotide: step 1/1. Functionally, catalyzes the reversible adenylation of nicotinate mononucleotide (NaMN) to nicotinic acid adenine dinucleotide (NaAD). The chain is Probable nicotinate-nucleotide adenylyltransferase from Neisseria gonorrhoeae (strain ATCC 700825 / FA 1090).